The following is a 1276-amino-acid chain: cGMP-specific 3',5'-cyclic phosphodiesterase (1276 aa).

Disordered stretches follow at residues 1–76, 91–185, and 241–260; these read MHEL…TAAG, NQVK…QQDV, and ASPT…SASS. 2 stretches are compositionally biased toward low complexity: residues 12–47 and 57–76; these read SSSS…SSAS and TSTA…TAAG. A compositionally biased stretch (pro residues) spans 109–124; sequence APYPPVPAAKPKPTPT. Residues 129–140 are compositionally biased toward basic and acidic residues; it reads SKFKSTSREVDV. The segment covering 147–166 has biased composition (polar residues); the sequence is ARSSTISPGVSIHTQTIQQE. Low complexity-rich tracts occupy residues 167 to 180 and 249 to 260; these read SSSA…SSSS and SPRSLSNSSASS. 2 consecutive GAF domains span residues 290–442 and 474–658; these read DIDV…GIGI and NLEC…GLGI. Positions 688-1119 constitute a PDEase domain; sequence SQDQTEKLTQ…RNWQDLAEKV (432 aa). The active-site Proton donor is the His764. The a divalent metal cation site is built by His768, His804, Asp805, and Asp1023. 2 disordered regions span residues 1162 to 1193 and 1205 to 1276; these read AQHG…TGAL and LYNS…CSLL. Basic and acidic residues-rich tracts occupy residues 1171–1180 and 1221–1233; these read DDSHTPEHQR and LESH…DDKS. Residues 1248–1263 show a composition bias toward low complexity; that stretch reads GRMSASSSTSSAGTVV. The segment covering 1266 to 1276 has biased composition (basic residues); that stretch reads SKKRSKLCSLL. Cys1273 is subject to Cysteine methyl ester. Residue Cys1273 is the site of S-farnesyl cysteine attachment. Positions 1274-1276 are cleaved as a propeptide — removed in mature form; the sequence is SLL.

It belongs to the cyclic nucleotide phosphodiesterase family. Interacts with PrBP. Requires a divalent metal cation as cofactor.

It localises to the cell membrane. It catalyses the reaction 3',5'-cyclic GMP + H2O = GMP + H(+). Functionally, has a role regulating cGMP transport in Malpighian tubule principal cells. In Drosophila persimilis (Fruit fly), this protein is cGMP-specific 3',5'-cyclic phosphodiesterase.